The primary structure comprises 240 residues: Uridylate kinase (240 aa).

13-16 (KASG) contributes to the ATP binding site. Glycine 55 provides a ligand contact to UMP. Residues glycine 56 and arginine 60 each coordinate ATP. UMP is bound by residues aspartate 75 and 136 to 143 (TGNPFFTT). Positions 163, 164, 169, and 172 each coordinate ATP.

Belongs to the UMP kinase family. As to quaternary structure, homohexamer.

Its subcellular location is the cytoplasm. The enzyme catalyses UMP + ATP = UDP + ADP. It functions in the pathway pyrimidine metabolism; CTP biosynthesis via de novo pathway; UDP from UMP (UMPK route): step 1/1. Inhibited by UTP. In terms of biological role, catalyzes the reversible phosphorylation of UMP to UDP. The protein is Uridylate kinase of Mesorhizobium japonicum (strain LMG 29417 / CECT 9101 / MAFF 303099) (Mesorhizobium loti (strain MAFF 303099)).